The sequence spans 119 residues: Large ribosomal subunit protein bL20 (119 aa).

Belongs to the bacterial ribosomal protein bL20 family.

Binds directly to 23S ribosomal RNA and is necessary for the in vitro assembly process of the 50S ribosomal subunit. It is not involved in the protein synthesizing functions of that subunit. This is Large ribosomal subunit protein bL20 from Acidovorax ebreus (strain TPSY) (Diaphorobacter sp. (strain TPSY)).